The primary structure comprises 495 residues: Glutamyl-tRNA(Gln) amidotransferase subunit A (495 aa).

Residues Lys-78 and Ser-158 each act as charge relay system in the active site. Ser-182 (acyl-ester intermediate) is an active-site residue.

The protein belongs to the amidase family. GatA subfamily. As to quaternary structure, heterotrimer of A, B and C subunits.

It carries out the reaction L-glutamyl-tRNA(Gln) + L-glutamine + ATP + H2O = L-glutaminyl-tRNA(Gln) + L-glutamate + ADP + phosphate + H(+). Allows the formation of correctly charged Gln-tRNA(Gln) through the transamidation of misacylated Glu-tRNA(Gln) in organisms which lack glutaminyl-tRNA synthetase. The reaction takes place in the presence of glutamine and ATP through an activated gamma-phospho-Glu-tRNA(Gln). The sequence is that of Glutamyl-tRNA(Gln) amidotransferase subunit A from Roseobacter denitrificans (strain ATCC 33942 / OCh 114) (Erythrobacter sp. (strain OCh 114)).